We begin with the raw amino-acid sequence, 709 residues long: Polyribonucleotide nucleotidyltransferase (709 aa).

Asp486 and Asp492 together coordinate Mg(2+). The KH domain maps to 553–612 (PRIHTIKINADKIKDVIGKGGSVIRALTEETGTTIEIEDDGTVKIAATSGEQAKQAIARI). The region spanning 622–690 (GRIYNGKVTR…RQGRIRLSMK (69 aa)) is the S1 motif domain. Residues 690-709 (KEAQATQQEAAETSSEDPAN) form a disordered region. The segment covering 691-702 (EAQATQQEAAET) has biased composition (low complexity).

It belongs to the polyribonucleotide nucleotidyltransferase family. As to quaternary structure, component of the RNA degradosome, which is a multiprotein complex involved in RNA processing and mRNA degradation. Mg(2+) is required as a cofactor.

It is found in the cytoplasm. It carries out the reaction RNA(n+1) + phosphate = RNA(n) + a ribonucleoside 5'-diphosphate. Its function is as follows. Involved in mRNA degradation. Catalyzes the phosphorolysis of single-stranded polyribonucleotides processively in the 3'- to 5'-direction. In Proteus mirabilis (strain HI4320), this protein is Polyribonucleotide nucleotidyltransferase.